A 520-amino-acid chain; its full sequence is Phospholipase C A (520 aa).

The segment at residues 1–38 (MSASPLLGMSRREFLTKLTGAGAAAFLMDWAAPVIEKA) is a signal peptide (tat-type signal).

It belongs to the bacterial phospholipase C family. Post-translationally, predicted to be exported by the Tat system. The position of the signal peptide cleavage has not been experimentally proven.

It is found in the secreted. Its subcellular location is the cell wall. It carries out the reaction a 1,2-diacyl-sn-glycero-3-phosphocholine + H2O = phosphocholine + a 1,2-diacyl-sn-glycerol + H(+). In terms of biological role, involved in virulence. Induces cytotoxic effects on mouse macrophage cell lines, via direct or indirect enzymatic hydrolysis of cell membrane phospholipids. Hydrolyzes phosphatidylcholine. The protein is Phospholipase C A of Mycobacterium tuberculosis (strain CDC 1551 / Oshkosh).